A 375-amino-acid polypeptide reads, in one-letter code: Trans-enoyl reductase iccB (375 aa).

48 to 51 contributes to the NADP(+) binding site; that stretch reads VDAK. Residue 143 to 150 participates in substrate binding; it reads AAVATVGL. NADP(+) is bound by residues 204-207, Y222, and 269-270; these read SSAS and LD. 289–293 contacts substrate; the sequence is TYSQF. An NADP(+)-binding site is contributed by 358-359; the sequence is IK.

This sequence belongs to the zinc-containing alcohol dehydrogenase family. In terms of assembly, monomer.

It catalyses the reaction N-[(4E,6E,10S,12Z,14E)-6,10-dimethyl-3-oxohexadeca-4,6,12,14-tetraenoyl]-L-tyrosyl-[ACP] = (3E,5S)-3-[(2E,4E,8S,10E,12Z)-1-hydroxy-4,8-dimethyltetradeca-2,4,10,12-tetraen-1-ylidene]-5-[(4-hydroxyphenyl)methyl]pyrrolidine-2,4-dione + holo-[ACP] + H(+). The protein operates within mycotoxin biosynthesis. Trans-enoyl reductase; part of the gene cluster that mediates the biosynthesis of ilicicolin H, a 4-hydroxy-2-pyridonealkaloid that has potent and broad antifungal activities by inhibiting the mitochondrial respiration chain. IccB collaborates with the hybrid PKS-NRPS synthetase iccA to assemble the backbone of ilicicolin H. The PKS portion of iccA and trans-acting enoyl reductase iccB work together to construct an octaketide, and two methyl groups are introduced by the MT domain of iccA during the chain assembly. The nascent chain is then condensed with tyrosine, catalyzed by the iliA C domain, and the resulting PKS-NRPS hybrid is offloaded by the iliA RED domain to form an advanced tetramic acid intermediate. The biosynthesis of ilicicolin H starts with formation of the tetramic acid by the hybrid PKS-NRPS synthetase iccA with the partnering trans-enoyl reductase iccB since iccA lacks a designated enoylreductase (ER) domain. The cytochrome P450 monooxygenase iccC then catalyzes the ring expansion of the tetramate to the acyclic 2-pyridone. The pericyclase iccD further converts the acyclic 2-pyridone into 8-epi-ilicicolin H. Finally, the epimerase iccE converts 8-epi-ilicicolin H into ilicicolin H via epimerization. IccA to iccE are sufficient for ilicicolin H biosynthesis and the roles of the remaining enzymes, iccF, iccG and iccH within the pathway have still to be determined. The protein is Trans-enoyl reductase iccB of Talaromyces variabilis (Penicillium variabile).